The sequence spans 616 residues: tRNA uridine 5-carboxymethylaminomethyl modification enzyme MnmG (616 aa).

Residues 10–15 (GAGHAG), Val122, and Ser177 each bind FAD. 271–285 (GPRYCPSIEDKVVRF) contacts NAD(+). Gln368 contacts FAD.

It belongs to the MnmG family. In terms of assembly, homodimer. Heterotetramer of two MnmE and two MnmG subunits. FAD serves as cofactor.

Its subcellular location is the cytoplasm. Its function is as follows. NAD-binding protein involved in the addition of a carboxymethylaminomethyl (cmnm) group at the wobble position (U34) of certain tRNAs, forming tRNA-cmnm(5)s(2)U34. This is tRNA uridine 5-carboxymethylaminomethyl modification enzyme MnmG from Malacoplasma penetrans (strain HF-2) (Mycoplasma penetrans).